We begin with the raw amino-acid sequence, 951 residues long: Translation initiation factor IF-2 (951 aa).

2 disordered regions span residues 58–255 (AERK…AVVI) and 305–329 (DVSR…KSLS). A compositionally biased stretch (low complexity) spans 101–170 (AEPQYAEPQQ…PQAQPAQPAA (70 aa)). A compositionally biased stretch (pro residues) spans 171–216 (PVAPPAPSAQPSAPQPPAAQPRPPQPPMPSRPPPAGYRPAPPPGAR). Positions 217–234 (PPMSAAPGAPAQPGAAGQ) are enriched in low complexity. The 170-residue stretch at 450–619 (IRPPVVTVMG…ALQSEVLELK (170 aa)) folds into the tr-type G domain. A G1 region spans residues 459–466 (GHVDHGKT). Residue 459–466 (GHVDHGKT) coordinates GTP. The G2 stretch occupies residues 484–488 (GITQH). The segment at 505-508 (DTPG) is G3. GTP is bound by residues 505-509 (DTPGH) and 559-562 (NKVD). The segment at 559–562 (NKVD) is G4. Positions 595–597 (SAR) are G5.

Belongs to the TRAFAC class translation factor GTPase superfamily. Classic translation factor GTPase family. IF-2 subfamily.

The protein localises to the cytoplasm. Its function is as follows. One of the essential components for the initiation of protein synthesis. Protects formylmethionyl-tRNA from spontaneous hydrolysis and promotes its binding to the 30S ribosomal subunits. Also involved in the hydrolysis of GTP during the formation of the 70S ribosomal complex. The protein is Translation initiation factor IF-2 of Anaeromyxobacter dehalogenans (strain 2CP-1 / ATCC BAA-258).